The sequence spans 607 residues: Hemagglutinin glycoprotein (607 aa).

Residues 1–38 (MFSHQDKVGAFYKNNARANSSKLSLVTDEVEERRSPWF) are Intravirion-facing. Residues 39-55 (LSILLILLVGILILLTI) traverse the membrane as a helical; Signal-anchor for type II membrane protein segment. Residues 56–607 (TGIRFHQVVK…IRFSCDRLDP (552 aa)) are Virion surface-facing. N-linked (GlcNAc...) asparagine; by host glycans are attached at residues Asn-149, Asn-276, Asn-391, Asn-422, Asn-456, and Asn-587.

Belongs to the paramyxoviruses hemagglutinin-neuraminidase family. Non-sialidase subfamily.

It is found in the virion membrane. The protein resides in the host membrane. In terms of biological role, attaches the virus to cell receptors and thereby initiating infection. Binding of H protein to the receptor induces a conformational change that allows the F protein to trigger virion/cell membranes fusion. The sequence is that of Hemagglutinin glycoprotein (H) from Phocidae (true seals).